We begin with the raw amino-acid sequence, 190 residues long: dCTP deaminase (190 aa).

113 to 118 (KSTYAR) contributes to the dCTP binding site. E139 functions as the Proton donor/acceptor in the catalytic mechanism. The dCTP site is built by Q158, Y172, K181, and Q182.

It belongs to the dCTP deaminase family. In terms of assembly, homotrimer.

The enzyme catalyses dCTP + H2O + H(+) = dUTP + NH4(+). It participates in pyrimidine metabolism; dUMP biosynthesis; dUMP from dCTP (dUTP route): step 1/2. Its function is as follows. Catalyzes the deamination of dCTP to dUTP. In Chlamydia caviae (strain ATCC VR-813 / DSM 19441 / 03DC25 / GPIC) (Chlamydophila caviae), this protein is dCTP deaminase.